A 224-amino-acid chain; its full sequence is Urease accessory protein UreF (224 aa).

This sequence belongs to the UreF family. UreD, UreF and UreG form a complex that acts as a GTP-hydrolysis-dependent molecular chaperone, activating the urease apoprotein by helping to assemble the nickel containing metallocenter of UreC. The UreE protein probably delivers the nickel.

It localises to the cytoplasm. Its function is as follows. Required for maturation of urease via the functional incorporation of the urease nickel metallocenter. The sequence is that of Urease accessory protein UreF from Escherichia coli O157:H7.